A 633-amino-acid chain; its full sequence is Endosomal/prevacuolar sodium/hydrogen exchanger (633 aa).

The first 21 residues, 1 to 21 (MLSKVLLNIAFKVLLTTAKRA), serve as a signal peptide directing secretion. Topologically, residues 22 to 61 (VDPDDDDELLPSPDLPGSDDPIAGDPDVDLNPVTEEMFSS) are lumenal. Residues 25-44 (DDDDELLPSPDLPGSDDPIA) form a disordered region. Low complexity predominate over residues 31–42 (LPSPDLPGSDDP). A helical transmembrane segment spans residues 62–82 (WALFIMLLLLISALWSSYYLT). Residues 83-85 (QKR) are Cytoplasmic-facing. Residues 86–106 (IRAVHETVLSIFYGMVIGLII) traverse the membrane as a helical segment. The Lumenal portion of the chain corresponds to 107 to 117 (RMSPGHYIQDT). A helical transmembrane segment spans residues 118–138 (VTFNSSYFFNVLLPPIILNSG). Residues 124 to 133 (YFFNVLLPPI) carry the Amiloride-binding motif. Residues 139–152 (YELNQVNFFNNMLS) are Cytoplasmic-facing. A helical membrane pass occupies residues 153–173 (ILIFAIPGTFISAVVIGIILY). The Lumenal portion of the chain corresponds to 174 to 189 (IWTFLGLESIDISFAD). Residues 190 to 211 (AMSVGATLSATDPVTILSIFNA) form a helical membrane-spanning segment. Residues 212 to 217 (YKVDPK) are Cytoplasmic-facing. The chain crosses the membrane as a helical span at residues 218–238 (LYTIIFGESLLNDAISIVMFE). Over 239 to 258 (TCQKFHGQPATFSSVFEGAG) the chain is Lumenal. Residues 259 to 279 (LFLMTFSVSLLIGVLIGILVA) traverse the membrane as a helical segment. Residues 280–288 (LLLKHTHIR) lie on the Cytoplasmic side of the membrane. Residues 289–308 (RYPQIESCLILLIAYESYFF) form a helical membrane-spanning segment. Topologically, residues 309–313 (SNGCH) are lumenal. The chain crosses the membrane as a helical span at residues 314-333 (MSGIVSLLFCGITLKHYAYY). Residues 334–344 (NMSRRSQITIK) lie on the Cytoplasmic side of the membrane. The helical transmembrane segment at 345-364 (YIFQLLARLSENFIFIYLGL) threads the bilayer. Residues 365–376 (ELFTEVELVYKP) are Cytoplasmic-facing. A helical transmembrane segment spans residues 377 to 397 (LLIIVAAISICVARWCAVFPL). Residues 398-431 (SQFVNWIYRVKTIRSMSGITGENISVPDEIPYNY) are Lumenal-facing. Residue N420 is glycosylated (N-linked (GlcNAc...) asparagine). A helical membrane pass occupies residues 432–452 (QMMTFWAGLRGAVGVALALGI). Residues 453-457 (QGEYK) lie on the Cytoplasmic side of the membrane. The helical transmembrane segment at 458–478 (FTLLATVLVVVVLTVIIFGGT) threads the bilayer. Phosphothreonine is present on T490. The residue at position 494 (S494) is a Phosphoserine. The residue at position 498 (T498) is a Phosphothreonine. Residue S499 is modified to Phosphoserine. Residues N515, N550, and N563 are each glycosylated (N-linked (GlcNAc...) asparagine). Residues 553-578 (TTGGNTFGGLNETENTSPNPARSSMD) form a disordered region. Polar residues predominate over residues 564–574 (ETENTSPNPAR). S569 bears the Phosphoserine mark.

This sequence belongs to the monovalent cation:proton antiporter 1 (CPA1) transporter (TC 2.A.36) family. Interacts with CYP6.

It is found in the endosome membrane. Its subcellular location is the prevacuolar compartment membrane. Its function is as follows. Endosomal/prevacuolar electroneutral Na(+)/H(+) exchanger which mediates intracellular sequestration of Na(+) cations, regulates vacuolar pH and contributes to osmotolerance following sudden exposure to hyperosmotic media. Also contributes to the postdiauxic/stationary phase resistance to osmotic stress and allows for the continued growth of cells until the acquired osmotolerance response can occur. Involved in hygromycin resistance probably through its influence on the electrochemical proton gradient affecting secondarily the entrance of hygromycin. Mediates pH-dependent vesicle trafficking out of the endosome. Contributes to K(+) sequestration and homeostasis. This chain is Endosomal/prevacuolar sodium/hydrogen exchanger (NHX1), found in Saccharomyces cerevisiae (strain ATCC 204508 / S288c) (Baker's yeast).